The chain runs to 118 residues: Large ribosomal subunit protein bL20 (118 aa).

The protein belongs to the bacterial ribosomal protein bL20 family.

Binds directly to 23S ribosomal RNA and is necessary for the in vitro assembly process of the 50S ribosomal subunit. It is not involved in the protein synthesizing functions of that subunit. In Campylobacter curvus (strain 525.92), this protein is Large ribosomal subunit protein bL20.